The following is a 119-amino-acid chain: Fluoride-specific ion channel FluC (119 aa).

Transmembrane regions (helical) follow at residues 5-25 (IIPL…LNLA), 30-50 (LSPA…IGIF), 59-79 (WKLL…GFSL), and 92-112 (SALA…WLGL). The Na(+) site is built by glycine 69 and threonine 72.

Belongs to the fluoride channel Fluc/FEX (TC 1.A.43) family.

It localises to the cell inner membrane. The catalysed reaction is fluoride(in) = fluoride(out). Its activity is regulated as follows. Na(+) is not transported, but it plays an essential structural role and its presence is essential for fluoride channel function. Functionally, fluoride-specific ion channel. Important for reducing fluoride concentration in the cell, thus reducing its toxicity. In Neisseria meningitidis serogroup A / serotype 4A (strain DSM 15465 / Z2491), this protein is Fluoride-specific ion channel FluC.